We begin with the raw amino-acid sequence, 131 residues long: Fumarate reductase subunit C (131 aa).

A run of 3 helical transmembrane segments spans residues 30–50 (EGTA…LFAL), 57–77 (WAGF…LITL), and 109–129 (IIKS…FVAL).

This sequence belongs to the FrdC family. As to quaternary structure, part of an enzyme complex containing four subunits: a flavoprotein (FrdA), an iron-sulfur protein (FrdB), and two hydrophobic anchor proteins (FrdC and FrdD).

The protein localises to the cell inner membrane. In terms of biological role, two distinct, membrane-bound, FAD-containing enzymes are responsible for the catalysis of fumarate and succinate interconversion; fumarate reductase is used in anaerobic growth, and succinate dehydrogenase is used in aerobic growth. Anchors the catalytic components of the fumarate reductase complex to the cell inner membrane, binds quinones. In Shigella flexneri, this protein is Fumarate reductase subunit C.